A 382-amino-acid chain; its full sequence is Succinate--CoA ligase [ADP-forming] subunit beta (382 aa).

ATP contacts are provided by residues Lys46, 53 to 55, Val95, and Glu100; that span reads GRG. The Mg(2+) site is built by Asn192 and Asp206. Residues Asn257 and 314 to 316 contribute to the substrate site; that span reads GIT.

The protein belongs to the succinate/malate CoA ligase beta subunit family. As to quaternary structure, heterotetramer of two alpha and two beta subunits. Mg(2+) serves as cofactor.

The enzyme catalyses succinate + ATP + CoA = succinyl-CoA + ADP + phosphate. It catalyses the reaction GTP + succinate + CoA = succinyl-CoA + GDP + phosphate. It participates in carbohydrate metabolism; tricarboxylic acid cycle; succinate from succinyl-CoA (ligase route): step 1/1. In terms of biological role, succinyl-CoA synthetase functions in the citric acid cycle (TCA), coupling the hydrolysis of succinyl-CoA to the synthesis of either ATP or GTP and thus represents the only step of substrate-level phosphorylation in the TCA. The beta subunit provides nucleotide specificity of the enzyme and binds the substrate succinate, while the binding sites for coenzyme A and phosphate are found in the alpha subunit. This is Succinate--CoA ligase [ADP-forming] subunit beta from Bacteroides fragilis (strain ATCC 25285 / DSM 2151 / CCUG 4856 / JCM 11019 / LMG 10263 / NCTC 9343 / Onslow / VPI 2553 / EN-2).